We begin with the raw amino-acid sequence, 414 residues long: tRNA(Ile)-lysidine synthase (414 aa).

13–18 (SGGIDS) contacts ATP.

It belongs to the tRNA(Ile)-lysidine synthase family.

It localises to the cytoplasm. The enzyme catalyses cytidine(34) in tRNA(Ile2) + L-lysine + ATP = lysidine(34) in tRNA(Ile2) + AMP + diphosphate + H(+). Functionally, ligates lysine onto the cytidine present at position 34 of the AUA codon-specific tRNA(Ile) that contains the anticodon CAU, in an ATP-dependent manner. Cytidine is converted to lysidine, thus changing the amino acid specificity of the tRNA from methionine to isoleucine. The sequence is that of tRNA(Ile)-lysidine synthase from Thermotoga sp. (strain RQ2).